We begin with the raw amino-acid sequence, 188 residues long: MKELLYYTFIETEVTGAFLVFREKTQNLVFASLGNDKLFLLGKVEGFLKKHEKQDTMYDLQELKEAETYKKSIENYTICLENKMPLPSGAIPFEFLFGTDFQRKVWNELLNVEHGHVVTYGDIAKRIGKPTAARSVGRACGSNNLALLVPCHRIVGSNRKLTGYKWSCKLKEQLLNNEKENSLSLSRL.

Residues Tyr-120, Gly-121, and Arg-134 each contribute to the DNA site. Cys-151 acts as the Nucleophile; methyl group acceptor in catalysis. Ser-157 lines the DNA pocket.

This sequence belongs to the MGMT family.

Its subcellular location is the nucleus. The catalysed reaction is a 6-O-methyl-2'-deoxyguanosine in DNA + L-cysteinyl-[protein] = S-methyl-L-cysteinyl-[protein] + a 2'-deoxyguanosine in DNA. It catalyses the reaction a 4-O-methyl-thymidine in DNA + L-cysteinyl-[protein] = a thymidine in DNA + S-methyl-L-cysteinyl-[protein]. Its function is as follows. Involved in the cellular defense against the biological effects of O6-methylguanine (O6-MeG) and O4-methylthymine (O4-MeT) in DNA. Repairs the methylated nucleobase in DNA by stoichiometrically transferring the methyl group to a cysteine residue in the enzyme. This is a suicide reaction: the enzyme is irreversibly inactivated. Prefers double-stranded DNA over single-stranded DNA as substrate. The protein is Methylated-DNA--protein-cysteine methyltransferase (MGT1) of Saccharomyces cerevisiae (strain ATCC 204508 / S288c) (Baker's yeast).